Consider the following 216-residue polypeptide: Cytidylate kinase (216 aa).

ATP is bound at residue 10-18; sequence GPAAAGKST.

This sequence belongs to the cytidylate kinase family. Type 1 subfamily.

Its subcellular location is the cytoplasm. The catalysed reaction is CMP + ATP = CDP + ADP. It catalyses the reaction dCMP + ATP = dCDP + ADP. This Macrococcus caseolyticus (strain JCSC5402) (Macrococcoides caseolyticum) protein is Cytidylate kinase.